Consider the following 86-residue polypeptide: Cell division topological specificity factor (86 aa).

Belongs to the MinE family.

Its function is as follows. Prevents the cell division inhibition by proteins MinC and MinD at internal division sites while permitting inhibition at polar sites. This ensures cell division at the proper site by restricting the formation of a division septum at the midpoint of the long axis of the cell. The protein is Cell division topological specificity factor of Bordetella petrii (strain ATCC BAA-461 / DSM 12804 / CCUG 43448).